A 228-amino-acid chain; its full sequence is MKINILSLFPEYFKAFQENSMIAKAIKLGHLEINVINFRDFSKEKHQKVDDTVYGGGDGMLLQVEPIDLALESVPNSYKILLSPQGQVFNQTKAHELAKHQEITLVCGHYEGFDERVLEFVDEELSVGDFILTGGEIPAMLITEAVARLVPGVLKKGSHENESFEGDGLLDYPQYTKPAIYKGLKVPEVLLSGNHALIDRWRKEASYSKTLKNRKDILAKRKEKPHEN.

S-adenosyl-L-methionine contacts are provided by residues G108 and 127 to 132; that span reads VGDFIL.

The protein belongs to the RNA methyltransferase TrmD family. Homodimer.

The protein resides in the cytoplasm. It catalyses the reaction guanosine(37) in tRNA + S-adenosyl-L-methionine = N(1)-methylguanosine(37) in tRNA + S-adenosyl-L-homocysteine + H(+). Its function is as follows. Specifically methylates guanosine-37 in various tRNAs. This Metamycoplasma arthritidis (strain 158L3-1) (Mycoplasma arthritidis) protein is tRNA (guanine-N(1)-)-methyltransferase.